Reading from the N-terminus, the 253-residue chain is Adapter protein MecA (253 aa).

It belongs to the MecA family. As to quaternary structure, homodimer.

In terms of biological role, enables the recognition and targeting of unfolded and aggregated proteins to the ClpC protease or to other proteins involved in proteolysis. This Streptococcus pyogenes serotype M18 (strain MGAS8232) protein is Adapter protein MecA.